Consider the following 274-residue polypeptide: Ubiquinone biosynthesis protein COQ4 homolog, mitochondrial (274 aa).

The transit peptide at 1–20 (MLRQTAFRSMKLNRTPGRYF) directs the protein to the mitochondrion. Residues 13–40 (NRTPGRYFTTAENMDTGSSQSPPDTEQK) form a disordered region. Positions 22 to 36 (TAENMDTGSSQSPPD) are enriched in polar residues. 4 residues coordinate Zn(2+): histidine 177, aspartate 178, histidine 181, and glutamate 193.

This sequence belongs to the COQ4 family. In terms of assembly, component of a multi-subunit COQ enzyme complex. Zn(2+) is required as a cofactor.

It localises to the mitochondrion inner membrane. It catalyses the reaction a 4-hydroxy-3-methoxy-5-(all-trans-polyprenyl)benzoate + H(+) = a 2-methoxy-6-(all-trans-polyprenyl)phenol + CO2. Its pathway is cofactor biosynthesis; ubiquinone biosynthesis. In terms of biological role, lyase that catalyzes the C1-decarboxylation of 4-hydroxy-3-methoxy-5-(all-trans-polyprenyl)benzoic acid into 2-methoxy-6-(all-trans-polyprenyl)phenol during ubiquinone biosynthesis. The sequence is that of Ubiquinone biosynthesis protein COQ4 homolog, mitochondrial from Aedes aegypti (Yellowfever mosquito).